The following is a 123-amino-acid chain: MGKTRIKKGDLVQVITRVRGRRNADGTKTSDLGKQGKVLEVIAETDRVLVEGVNRIKRHTKARPGVEGGIVEREAPIHISNVQLVDPETKKPTRVGIRTEQVERDGRTKTNRIRVAKRSGKDI.

Belongs to the universal ribosomal protein uL24 family. Part of the 50S ribosomal subunit.

One of two assembly initiator proteins, it binds directly to the 5'-end of the 23S rRNA, where it nucleates assembly of the 50S subunit. Functionally, one of the proteins that surrounds the polypeptide exit tunnel on the outside of the subunit. The protein is Large ribosomal subunit protein uL24 of Kineococcus radiotolerans (strain ATCC BAA-149 / DSM 14245 / SRS30216).